Reading from the N-terminus, the 461-residue chain is Cysteine--tRNA ligase (461 aa).

Cys-29 contacts Zn(2+). Residues 31–41 carry the 'HIGH' region motif; that stretch reads MTVYDFCHIGH. Residues Cys-210, His-235, and Glu-239 each contribute to the Zn(2+) site. The 'KMSKS' region signature appears at 267 to 271; it reads KMSKS. Lys-270 serves as a coordination point for ATP.

It belongs to the class-I aminoacyl-tRNA synthetase family. In terms of assembly, monomer. The cofactor is Zn(2+).

The protein resides in the cytoplasm. It catalyses the reaction tRNA(Cys) + L-cysteine + ATP = L-cysteinyl-tRNA(Cys) + AMP + diphosphate. The protein is Cysteine--tRNA ligase of Azotobacter vinelandii (strain DJ / ATCC BAA-1303).